The sequence spans 842 residues: Alanine--tRNA ligase (842 aa).

Histidine 549, histidine 553, cysteine 650, and histidine 654 together coordinate Zn(2+).

It belongs to the class-II aminoacyl-tRNA synthetase family. The cofactor is Zn(2+).

The protein resides in the cytoplasm. The enzyme catalyses tRNA(Ala) + L-alanine + ATP = L-alanyl-tRNA(Ala) + AMP + diphosphate. In terms of biological role, catalyzes the attachment of alanine to tRNA(Ala) in a two-step reaction: alanine is first activated by ATP to form Ala-AMP and then transferred to the acceptor end of tRNA(Ala). Also edits incorrectly charged Ser-tRNA(Ala) and Gly-tRNA(Ala) via its editing domain. This chain is Alanine--tRNA ligase, found in Campylobacter jejuni subsp. doylei (strain ATCC BAA-1458 / RM4099 / 269.97).